We begin with the raw amino-acid sequence, 109 residues long: Flagellar hook-basal body complex protein FliE (109 aa).

The protein belongs to the FliE family.

Its subcellular location is the bacterial flagellum basal body. The chain is Flagellar hook-basal body complex protein FliE from Pseudomonas aeruginosa (strain LESB58).